A 757-amino-acid polypeptide reads, in one-letter code: UDP-N-acetylmuramoyl-L-alanyl-D-glutamate--2,6-diaminopimelate ligase MurE homolog, chloroplastic (757 aa).

Residues 1 to 11 (MATAPLAFHLP) show a composition bias toward low complexity. The N-terminal 53 residues, 1 to 53 (MATAPLAFHLPFPFPSASRPPPRLLPPSRRPPAARLAATRRFRPPTADDEPPE), are a transit peptide targeting the chloroplast. 3 disordered regions span residues 1 to 112 (MATA…DEFF), 126 to 152 (FTRRGLIKPSAPAPSQPEEEDGLADEL), and 172 to 195 (VSLADEEDEEANGGGGGVDYGDDG). The span at 12–30 (FPFPSASRPPPRLLPPSRR) shows a compositional bias: pro residues. 2 stretches are compositionally biased toward acidic residues: residues 47–56 (ADDEPPEAAE) and 142–152 (PEEEDGLADEL).

The protein belongs to the MurCDEF family. MurE subfamily. In terms of assembly, component of the plastid-encoded plastid RNA polymerase (PEP) complex.

It is found in the plastid. The protein localises to the chloroplast. Required for the activity of the plastid-encoded RNA polymerase (PEP) and full expression of genes transcribed by PEP. This Oryza sativa subsp. japonica (Rice) protein is UDP-N-acetylmuramoyl-L-alanyl-D-glutamate--2,6-diaminopimelate ligase MurE homolog, chloroplastic.